An 837-amino-acid polypeptide reads, in one-letter code: Phosphatidylinositol-glycan-specific phospholipase D (837 aa).

The first 23 residues, 1-23 (MSAGRLWSSLLLLLPLFCSKSSS), serve as a signal peptide directing secretion. 5 N-linked (GlcNAc...) asparagine glycosylation sites follow: Asn94, Asn267, Asn287, Asn303, and Asn317. FG-GAP repeat units lie at residues 364–425 (SPSA…GLPP), 431–492 (NKEG…GRLS), 494–554 (SPNV…RNDK), 561–619 (EADW…SLGK), 629–689 (QSTI…GATR), 701–767 (ALLS…TLGD), and 785–837 (QYVL…FSSD). Residues Asn477, Asn496, Asn586, Asn599, and Asn655 are each glycosylated (N-linked (GlcNAc...) asparagine).

This sequence belongs to the GPLD1 family. Monomer. Widely expressed.

Its subcellular location is the secreted. It carries out the reaction a 6-(alpha-D-glucosaminyl)-1-(1,2-diacyl-sn-glycero-3-phospho)-1D-myo-inositol + H2O = 6-(alpha-D-glucosaminyl)-1D-myo-inositol + a 1,2-diacyl-sn-glycero-3-phosphate + H(+). This protein hydrolyzes the inositol phosphate linkage in proteins anchored by phosphatidylinositol glycans (GPI-anchor) thus releasing these proteins from the membrane. This chain is Phosphatidylinositol-glycan-specific phospholipase D (Gpld1), found in Mus musculus (Mouse).